A 709-amino-acid polypeptide reads, in one-letter code: Anillin-like protein 3 (709 aa).

A PH domain is found at aspartate 584–aspartate 705.

This Caenorhabditis elegans protein is Anillin-like protein 3 (ani-3).